The following is a 368-amino-acid chain: Probable endopolygalacturonase A (368 aa).

Residues 1–18 form the signal peptide; that stretch reads MRSVELLSLAALGSLVAA. Residues 19–31 constitute a propeptide that is removed on maturation; the sequence is APAPSRVSDLTKR. C35 and C50 form a disulfide bridge. PbH1 repeat units lie at residues 140 to 162, 167 to 192, 193 to 214, 215 to 235, 244 to 265, 273 to 295, and 307 to 352; these read LEDS…SVQA, LIDI…DISE, STGV…AINS, GENI…SIGS, VKNV…RIKT, VSEV…VIEQ, and TTGV…DITG. The active-site Proton donor is D207. C209 and C225 form a disulfide bridge. Residue H229 is part of the active site. N246 carries an N-linked (GlcNAc...) asparagine glycan. Cystine bridges form between C335-C340 and C359-C368.

This sequence belongs to the glycosyl hydrolase 28 family.

It is found in the secreted. The enzyme catalyses (1,4-alpha-D-galacturonosyl)n+m + H2O = (1,4-alpha-D-galacturonosyl)n + (1,4-alpha-D-galacturonosyl)m.. Its function is as follows. Involved in maceration and soft-rotting of plant tissue. Hydrolyzes the 1,4-alpha glycosidic bonds of de-esterified pectate in the smooth region of the plant cell wall. This is Probable endopolygalacturonase A (pgaA) from Neosartorya fischeri (strain ATCC 1020 / DSM 3700 / CBS 544.65 / FGSC A1164 / JCM 1740 / NRRL 181 / WB 181) (Aspergillus fischerianus).